Here is a 473-residue protein sequence, read N- to C-terminus: 3-isopropylmalate dehydratase large subunit 2 (473 aa).

[4Fe-4S] cluster is bound by residues Cys-350, Cys-410, and Cys-413.

It belongs to the aconitase/IPM isomerase family. LeuC type 1 subfamily. Heterodimer of LeuC and LeuD. The cofactor is [4Fe-4S] cluster.

The enzyme catalyses (2R,3S)-3-isopropylmalate = (2S)-2-isopropylmalate. The protein operates within amino-acid biosynthesis; L-leucine biosynthesis; L-leucine from 3-methyl-2-oxobutanoate: step 2/4. Catalyzes the isomerization between 2-isopropylmalate and 3-isopropylmalate, via the formation of 2-isopropylmaleate. This chain is 3-isopropylmalate dehydratase large subunit 2, found in Salmonella choleraesuis (strain SC-B67).